Here is a 413-residue protein sequence, read N- to C-terminus: Autophagy-related protein 18 (413 aa).

WD repeat units lie at residues 1–36, 69–114, 141–182, 185–225, and 230–269; these read MAMNFVTFNQDYSYLAVATAKGFRIFTTDPFAKSYE, KRQS…LLYT, PHKA…AINV, AHRS…KLYQ, and SIPSRIYSMSFNTTSTLLCVSSSTETIHLFKLSQGQSSES. The L/FRRG motif motif lies at 226 to 230; it reads FRRGS. Residues 263-289 show a composition bias toward low complexity; sequence QGQSSESSLPSPSAPQRSMSQSSLSNS. The disordered stretch occupies residues 263-315; sequence QGQSSESSLPSPSAPQRSMSQSSLSNSPDEDETSGDKDSSEFHSRKHNGTLMG. The segment covering 296-305 has biased composition (basic and acidic residues); that stretch reads SGDKDSSEFH. WD repeat units lie at residues 308 to 354 and 366 to 406; these read KHNG…AWIK and GNTG…GGEG.

The protein belongs to the WD repeat PROPPIN family. In terms of assembly, component of the PI(3,5)P2 regulatory complex.

The protein localises to the preautophagosomal structure membrane. It localises to the vacuole membrane. The protein resides in the endosome membrane. Its function is as follows. The PI(3,5)P2 regulatory complex regulates both the synthesis and turnover of phosphatidylinositol 3,5-bisphosphate (PtdIns(3,5)P2). Necessary for proper vacuole morphology. Plays an important role in osmotically-induced vacuole fragmentation. Required for cytoplasm to vacuole transport (Cvt) vesicle formation, pexophagy and starvation-induced autophagy. Involved in correct atg9 trafficking to the pre-autophagosomal structure. Might also be involved in premeiotic DNA replication. This is Autophagy-related protein 18 (atg18) from Aspergillus oryzae (strain ATCC 42149 / RIB 40) (Yellow koji mold).